Reading from the N-terminus, the 232-residue chain is Charged multivesicular body protein 4c (232 aa).

Disordered regions lie at residues 1 to 23 (MSKLGKFFKGSRSSRARAAPSAQ) and 172 to 232 (EQEE…AWAT). Residues 1-153 (MSKLGKFFKG…EISEAFSQRV (153 aa)) are intramolecular interaction with C-terminus. The segment covering 11-23 (SRSSRARAAPSAQ) has biased composition (low complexity). 2 coiled-coil regions span residues 21-50 (SAQEALARLREIEEMMAKKQEYLENRIQRE) and 125-182 (LNKI…KMTS). An intramolecular interaction with N-terminus region spans residues 154–232 (QFADGFDEDE…DFKQLAAWAT (79 aa)). Serine 210 carries the post-translational modification Phosphoserine; by AURKB.

This sequence belongs to the SNF7 family. Probable core component of the endosomal sorting required for transport complex III (ESCRT-III). ESCRT-III components are thought to multimerize to form a flat lattice on the perimeter membrane of the endosome. Several assembly forms of ESCRT-III may exist that interact and act sequentially. Self-associates. Interacts with CHMP2A. Interacts with CHMP4A. Interacts with CHMP4B. Interacts with CHMP6. Interacts with VPS4A. Interacts with PDCD6IP; the interaction is direct. In terms of processing, phosphorylated at Ser-210 by AURKB during cytokinesis: together with ZFYVE19/ANCHR, phosphorylated CHMP4C retains abscission-competent VPS4 (VPS4A and/or VPS4B) at the midbody ring until abscission checkpoint signaling is terminated at late cytokinesis.

The protein resides in the cytoplasm. The protein localises to the cytosol. It localises to the late endosome membrane. It is found in the midbody. Its subcellular location is the midbody ring. Probable core component of the endosomal sorting required for transport complex III (ESCRT-III) which is involved in multivesicular bodies (MVBs) formation and sorting of endosomal cargo proteins into MVBs. MVBs contain intraluminal vesicles (ILVs) that are generated by invagination and scission from the limiting membrane of the endosome and mostly are delivered to lysosomes enabling degradation of membrane proteins, such as stimulated growth factor receptors, lysosomal enzymes and lipids. The MVB pathway appears to require the sequential function of ESCRT-O, -I,-II and -III complexes. ESCRT-III proteins mostly dissociate from the invaginating membrane before the ILV is released. The ESCRT machinery also functions in topologically equivalent membrane fission events, such as the terminal stages of cytokinesis. Key component of the cytokinesis checkpoint, a process required to delay abscission to prevent both premature resolution of intercellular chromosome bridges and accumulation of DNA damage: upon phosphorylation by AURKB, together with ZFYVE19/ANCHR, retains abscission-competent VPS4 (VPS4A and/or VPS4B) at the midbody ring until abscission checkpoint signaling is terminated at late cytokinesis. Deactivation of AURKB results in dephosphorylation of CHMP4C followed by its dissociation from ANCHR and VPS4 and subsequent abscission. ESCRT-III proteins are believed to mediate the necessary vesicle extrusion and/or membrane fission activities, possibly in conjunction with the AAA ATPase VPS4. CHMP4A/B/C are required for the exosomal release of SDCBP, CD63 and syndecan. The chain is Charged multivesicular body protein 4c (Chmp4c) from Rattus norvegicus (Rat).